The following is a 574-amino-acid chain: Septation ring formation regulator EzrA (574 aa).

The Extracellular segment spans residues 1–7 (MSSGIIL). A helical membrane pass occupies residues 8–26 (LIVAIVLLVIIAYLVGVII). Over 27 to 574 (RKRNDSLITS…YEKTREHIRF (548 aa)) the chain is Cytoplasmic. Coiled-coil stretches lie at residues 102–141 (NFIR…EEKN), 274–350 (ELVT…ETES), and 459–520 (QLEA…SFEA).

Belongs to the EzrA family.

The protein resides in the cell membrane. Negative regulator of FtsZ ring formation; modulates the frequency and position of FtsZ ring formation. Inhibits FtsZ ring formation at polar sites. Interacts either with FtsZ or with one of its binding partners to promote depolymerization. The chain is Septation ring formation regulator EzrA from Streptococcus pyogenes serotype M6 (strain ATCC BAA-946 / MGAS10394).